The chain runs to 285 residues: 4-diphosphocytidyl-2-C-methyl-D-erythritol kinase (285 aa).

Lysine 10 is an active-site residue. Proline 94–serine 104 contacts ATP. Aspartate 136 is a catalytic residue.

It belongs to the GHMP kinase family. IspE subfamily.

It catalyses the reaction 4-CDP-2-C-methyl-D-erythritol + ATP = 4-CDP-2-C-methyl-D-erythritol 2-phosphate + ADP + H(+). Its pathway is isoprenoid biosynthesis; isopentenyl diphosphate biosynthesis via DXP pathway; isopentenyl diphosphate from 1-deoxy-D-xylulose 5-phosphate: step 3/6. Its function is as follows. Catalyzes the phosphorylation of the position 2 hydroxy group of 4-diphosphocytidyl-2C-methyl-D-erythritol. The sequence is that of 4-diphosphocytidyl-2-C-methyl-D-erythritol kinase from Latilactobacillus sakei subsp. sakei (strain 23K) (Lactobacillus sakei subsp. sakei).